The sequence spans 710 residues: Protein-glutamine gamma-glutamyltransferase Z (710 aa).

Catalysis depends on residues cysteine 279, histidine 338, and aspartate 361. Ca(2+) is bound by residues asparagine 401, aspartate 403, glutamate 450, and glutamate 455.

Belongs to the transglutaminase superfamily. Transglutaminase family. It depends on Ca(2+) as a cofactor. In terms of tissue distribution, widely expressed.

The enzyme catalyses L-glutaminyl-[protein] + L-lysyl-[protein] = [protein]-L-lysyl-N(6)-5-L-glutamyl-[protein] + NH4(+). Catalyzes the cross-linking of proteins and the conjugation of polyamines to proteins. In Homo sapiens (Human), this protein is Protein-glutamine gamma-glutamyltransferase Z (TGM7).